Consider the following 186-residue polypeptide: Putative 5'(3')-deoxyribonucleotidase (186 aa).

Asp-6 acts as the Nucleophile in catalysis. Asp-6, Asp-8, and Asp-137 together coordinate Mg(2+). Asp-8 functions as the Proton donor in the catalytic mechanism.

It belongs to the 5'(3')-deoxyribonucleotidase family. Requires Mg(2+) as cofactor.

In terms of biological role, dephosphorylates the 5' and 2'(3')-phosphates of deoxyribonucleotides. The protein is Putative 5'(3')-deoxyribonucleotidase of Bordetella pertussis (strain Tohama I / ATCC BAA-589 / NCTC 13251).